The primary structure comprises 118 residues: MPRVKRGVTARARHKKVIDAAKGYRGRRNNVYRIAKQAVMRAGQYAYRDRRNKKRVFRALWIARINAGAREHGLSYSKFMNGLKKASIELDRKVLSDMAIHDKVAFAAIVNQVKANVA.

The protein belongs to the bacterial ribosomal protein bL20 family.

In terms of biological role, binds directly to 23S ribosomal RNA and is necessary for the in vitro assembly process of the 50S ribosomal subunit. It is not involved in the protein synthesizing functions of that subunit. This is Large ribosomal subunit protein bL20 from Ralstonia nicotianae (strain ATCC BAA-1114 / GMI1000) (Ralstonia solanacearum).